We begin with the raw amino-acid sequence, 147 residues long: Male-specific protein scotti (147 aa).

The tract at residues 55-93 (PQEPPLGVFPAQGGPNGPPRRRKKRSFYTMTKPTPPCQS) is disordered. The span at 82 to 93 (YTMTKPTPPCQS) shows a compositional bias: polar residues. An N-linked (GlcNAc...) asparagine glycan is attached at N128.

Belongs to the male-specific scotti family. In terms of tissue distribution, expressed in primary spermatocytes and round spermatids. Low expression is seen in very short elongating cysts, but were detected at high levels in a few longer spermatid cysts.

Its function is as follows. Post-meiotically transcribed gene that has a role in late spermiogenesis; required for actin cone progression during spermatid individualization. The polypeptide is Male-specific protein scotti (Drosophila melanogaster (Fruit fly)).